The chain runs to 480 residues: Cyclin L homolog cyl-1 (480 aa).

The tract at residues 25–58 (PKEQNGNVEPKKEEDEKFESTYKQNENTQITPSS) is disordered. Positions 33 to 44 (EPKKEEDEKFES) are enriched in basic and acidic residues. The segment covering 45–58 (TYKQNENTQITPSS) has biased composition (polar residues). A Cyclin N-terminal domain is found at 91 to 230 (PSLVDGLSKE…RRILATLGFV (140 aa)). A disordered region spans residues 368 to 480 (KMAPDGEKST…ESSTPPRSRR (113 aa)). 2 stretches are compositionally biased toward basic and acidic residues: residues 384-409 (KDSRKVSPDRKNGTKDRGEADRGKKE) and 418-442 (NDRDGRGDRRDRDKDRGDRRKDEKK). Positions 443 to 453 (DRRKRTRSRSR) are enriched in basic residues. Residues 454–472 (DRKDKNRNRDVGKRYRKES) show a composition bias toward basic and acidic residues.

Belongs to the cyclin family.

Functionally, involved in pre-mRNA splicing. Functions in association with cyclin-dependent kinases (CDKs). Involved in induction of expression of heat shock protein hsp-16.2 in response to heat shock. Plays a role in male tail development, perhaps acting together with cell cycle regulators cdc-25.2, cdk-1, cyb-3, and cyd-1. In Caenorhabditis elegans, this protein is Cyclin L homolog cyl-1.